A 208-amino-acid chain; its full sequence is Glycerol-3-phosphate acyltransferase (208 aa).

5 helical membrane passes run 3-23, 55-75, 81-101, 113-133, and 155-175; these read IIIM…VIIG, IVMV…TLLF, YTLL…YIGF, ILLA…LLLV, and IFYY…LFIF.

The protein belongs to the PlsY family. Probably interacts with PlsX.

It is found in the cell membrane. The catalysed reaction is an acyl phosphate + sn-glycerol 3-phosphate = a 1-acyl-sn-glycero-3-phosphate + phosphate. Its pathway is lipid metabolism; phospholipid metabolism. Catalyzes the transfer of an acyl group from acyl-phosphate (acyl-PO(4)) to glycerol-3-phosphate (G3P) to form lysophosphatidic acid (LPA). This enzyme utilizes acyl-phosphate as fatty acyl donor, but not acyl-CoA or acyl-ACP. The polypeptide is Glycerol-3-phosphate acyltransferase (Lactiplantibacillus plantarum (strain ATCC BAA-793 / NCIMB 8826 / WCFS1) (Lactobacillus plantarum)).